Here is a 535-residue protein sequence, read N- to C-terminus: Putative cysteine ligase BshC (535 aa).

The stretch at 420–477 forms a coiled coil; the sequence is DTFKALKESINSAYKNLQEKLAPLGADFQKLTGENLGRVMAQVKYLEERAQKYHREKN.

Belongs to the BshC family.

Functionally, involved in bacillithiol (BSH) biosynthesis. May catalyze the last step of the pathway, the addition of cysteine to glucosamine malate (GlcN-Mal) to generate BSH. This chain is Putative cysteine ligase BshC, found in Carboxydothermus hydrogenoformans (strain ATCC BAA-161 / DSM 6008 / Z-2901).